Reading from the N-terminus, the 635-residue chain is Interferon-induced GTP-binding protein Mx2 (635 aa).

Positions 31 to 304 constitute a Dynamin-type G domain; sequence DLALPAIAVI…LVQHIEKSMP (274 aa). The segment at 41-48 is G1 motif; sequence GDQSSGKS. 41–48 serves as a coordination point for GTP; that stretch reads GDQSSGKS. Positions 66-68 are G2 motif; it reads VTR. The tract at residues 142 to 145 is G3 motif; the sequence is DLPG. GTP contacts are provided by residues 142 to 146 and 211 to 214; these read DLPGI and TKPD. The G4 motif stretch occupies residues 211 to 214; that stretch reads TKPD. A G5 motif region spans residues 243–246; it reads KCRG. Residues 549–635 form the GED domain; that stretch reads LREMMLHLKS…MKAHNYLVEF (87 aa).

Belongs to the TRAFAC class dynamin-like GTPase superfamily. Dynamin/Fzo/YdjA family.

The protein localises to the nucleus. The protein resides in the cytoplasm. Functionally, does not inhibit strain RB-1 of the fish pathogen, infectious hematopoietic necrosis virus (IHNV). This chain is Interferon-induced GTP-binding protein Mx2, found in Oncorhynchus mykiss (Rainbow trout).